We begin with the raw amino-acid sequence, 214 residues long: MAPMKLYGAVMSWNLTRCATALEEAGSDYEIVPINFATAEHKSPEHLVRNPFGQVPALQDGDLYLFESRAICKYAARKNKPELLREGNLEEAAMVDVWIEVEANQYTAALNPILFQVLISPMLGGTTDQKVVDENLEKLKKVLEVYEARLTKCKYLAGDFLSLADLNHVSVTLCLFATPYASVLDAYPHVKAWWSGLMERPSVQKVAALMKPSA.

The GST N-terminal domain occupies 2–83; the sequence is APMKLYGAVM…YAARKNKPEL (82 aa). Residues S12, 41 to 42, 54 to 55, and 67 to 68 contribute to the glutathione site; these read HK, QV, and ES. The GST C-terminal domain maps to 88–214; that stretch reads NLEEAAMVDV…KVAALMKPSA (127 aa).

The protein belongs to the GST superfamily. Phi family. In terms of assembly, homodimer or heterodimer of GST-I and GST-IV (=GST-II). In terms of tissue distribution, expressed in the stem and leaves, lower levels are seen in the pollen and endosperm.

The enzyme catalyses RX + glutathione = an S-substituted glutathione + a halide anion + H(+). Functionally, conjugation of reduced glutathione to a wide number of exogenous and endogenous hydrophobic electrophiles. Involved in the detoxification of certain herbicides. The polypeptide is Glutathione S-transferase 1 (GST1) (Zea mays (Maize)).